Reading from the N-terminus, the 813-residue chain is LPS-assembly protein LptD (813 aa).

The first 22 residues, 1–22, serve as a signal peptide directing secretion; it reads MRRALRLLPLPLSIAICLPAMA.

The protein belongs to the LptD family. As to quaternary structure, component of the lipopolysaccharide transport and assembly complex. Interacts with LptE and LptA.

It localises to the cell outer membrane. Its function is as follows. Together with LptE, is involved in the assembly of lipopolysaccharide (LPS) at the surface of the outer membrane. In Xanthomonas oryzae pv. oryzae (strain MAFF 311018), this protein is LPS-assembly protein LptD.